The following is a 325-amino-acid chain: E3 ubiquitin-protein ligase EL5 (325 aa).

The tract at residues 1-29 (MVRGVEQGGPAMDESSSSSSPSPVSAPAG) is disordered. The segment covering 15–28 (SSSSSSPSPVSAPA) has biased composition (low complexity). The chain crosses the membrane as a helical span at residues 38 to 58 (IATVAAVLIVFAALTLAFVLL). Residues 70-105 (TTTSTSGRGRRPRPRRRSGSGGDGGTGGGVDPEVLR) are disordered. The segment covering 77-87 (RGRRPRPRRRS) has biased composition (basic residues). The segment covering 88 to 99 (GSGGDGGTGGGV) has biased composition (gly residues). The segment at 134-176 (CAVCLAELEDGEEARFLPRCGHGFHAECVDMWLGSHSTCPLCR) adopts an RING-type; atypical zinc-finger fold. Disordered regions lie at residues 267–289 (GAAGSTSSCSCATGGDNDDGDVE) and 303–325 (AATPARPPEAEAGARTAAAHVRN). Residues 268–281 (AAGSTSSCSCATGG) show a composition bias toward low complexity.

The protein localises to the cell membrane. It catalyses the reaction S-ubiquitinyl-[E2 ubiquitin-conjugating enzyme]-L-cysteine + [acceptor protein]-L-lysine = [E2 ubiquitin-conjugating enzyme]-L-cysteine + N(6)-ubiquitinyl-[acceptor protein]-L-lysine.. Its pathway is protein modification; protein ubiquitination. Its function is as follows. Functions as an E3 ubiquitin-protein ligase in cooperation with the E2 ubiquitin conjugating enzymes UBC5A and UBC5B. Involved in root development. Required for the maintenance of cell viability after the initiation of root primordial formation. May mediate the degradation of cytotoxic proteins produced in root cells after the actions of auxin, cytokinin and jasmonic acid. Mediates 'Lys-48'-linked polyubiquitination of MBP in vitro. This Oryza sativa subsp. japonica (Rice) protein is E3 ubiquitin-protein ligase EL5 (EL5.1).